We begin with the raw amino-acid sequence, 122 residues long: Large ribosomal subunit protein uL14 (122 aa).

Belongs to the universal ribosomal protein uL14 family. In terms of assembly, part of the 50S ribosomal subunit. Forms a cluster with proteins L3 and L19. In the 70S ribosome, L14 and L19 interact and together make contacts with the 16S rRNA in bridges B5 and B8.

In terms of biological role, binds to 23S rRNA. Forms part of two intersubunit bridges in the 70S ribosome. This Pediococcus pentosaceus (strain ATCC 25745 / CCUG 21536 / LMG 10740 / 183-1w) protein is Large ribosomal subunit protein uL14.